The following is a 39-amino-acid chain: Putative beta-neurotoxin (39 aa).

Residues 1–39 (GGKEGYPLNSSNGCKSGRFAGTNSNENTECKGXDAENGY) form a disordered region. The LCN-type CS-alpha/beta domain maps to 3 to 39 (KEGYPLNSSNGCKSGRFAGTNSNENTECKGXDAENGY). A compositionally biased stretch (basic and acidic residues) spans 28–39 (TECKGXDAENGY).

Belongs to the long (4 C-C) scorpion toxin superfamily. Sodium channel inhibitor family. Beta subfamily. As to expression, expressed by the venom gland.

The protein resides in the secreted. Beta toxins bind voltage-independently at site-4 of sodium channels (Nav) and shift the voltage of activation toward more negative potentials thereby affecting sodium channel activation and promoting spontaneous and repetitive firing. The sequence is that of Putative beta-neurotoxin from Tityus pachyurus (Colombian scorpion).